Reading from the N-terminus, the 132-residue chain is Small ribosomal subunit protein eS24 (132 aa).

The segment covering 90 to 100 (RLAKHGLYEKK) has biased composition (basic and acidic residues). Residues 90 to 132 (RLAKHGLYEKKKTSRKQRKERKNRMKKVRGTAKANVGAGKKKD) are disordered. Basic residues predominate over residues 101–119 (KTSRKQRKERKNRMKKVRG).

It belongs to the eukaryotic ribosomal protein eS24 family. In terms of assembly, component of the small ribosomal subunit. Part of the small subunit (SSU) processome, composed of more than 70 proteins and the RNA chaperone small nucleolar RNA (snoRNA) U3.

The protein localises to the cytoplasm. It localises to the nucleus. The protein resides in the nucleolus. Functionally, component of the small ribosomal subunit. The ribosome is a large ribonucleoprotein complex responsible for the synthesis of proteins in the cell. Required for processing of pre-rRNA and maturation of 40S ribosomal subunits. Part of the small subunit (SSU) processome, first precursor of the small eukaryotic ribosomal subunit. During the assembly of the SSU processome in the nucleolus, many ribosome biogenesis factors, an RNA chaperone and ribosomal proteins associate with the nascent pre-rRNA and work in concert to generate RNA folding, modifications, rearrangements and cleavage as well as targeted degradation of pre-ribosomal RNA by the RNA exosome. The sequence is that of Small ribosomal subunit protein eS24 (rps24) from Xenopus laevis (African clawed frog).